The following is a 49-amino-acid chain: MCYGIIVMILFSLYKGLAPNSAIVGISIMIIIAIGIYLIIEYAIKKIIG.

The chain crosses the membrane as a helical span at residues 22-42 (AIVGISIMIIIAIGIYLIIEY).

It is found in the membrane. This is an uncharacterized protein from Methanocaldococcus jannaschii (strain ATCC 43067 / DSM 2661 / JAL-1 / JCM 10045 / NBRC 100440) (Methanococcus jannaschii).